The following is a 123-amino-acid chain: Potassium voltage-gated channel subfamily E member 2 (123 aa).

N-linked (GlcNAc...) asparagine glycans are attached at residues asparagine 6 and asparagine 29. The chain crosses the membrane as a helical span at residues 49–69; sequence VILYLMVMIGMFSFIIVAILV. Topologically, residues 70-123 are cytoplasmic; sequence STVKSKRREHSNDPYHQYIVEDWQEKYKSQILNLEESKATIHENIGAAGFKMSP.

It belongs to the potassium channel KCNE family. In terms of assembly, interacts with KCNB1. Associates with KCNH2/ERG1. May associate with KCNQ2 and KCNQ3. Associates with HCN1 and probably HCN2. Heteromultimer with KCNC2. Interacts with KCNC2. Interacts with KCNQ1; forms a heterooligomer complex that targets to the membrane raft and leading to currents with an apparently instantaneous activation, a rapid deactivation process and a linear current-voltage relationship and decreases the amplitude of the outward current. As to expression, highly expressed in brain, heart, skeletal muscle, pancreas, placenta, kidney, colon and thymus. A small but significant expression is found in liver, ovary, testis, prostate, small intestine and leukocytes. Very low expression, nearly undetectable, in lung and spleen.

The protein resides in the cell membrane. The protein localises to the apical cell membrane. Functionally, ancillary protein that functions as a regulatory subunit of the voltage-gated potassium (Kv) channel complex composed of pore-forming and potassium-conducting alpha subunits and of regulatory beta subunits. KCNE2 beta subunit modulates the gating kinetics and enhances stability of the channel complex. Alters the gating of the delayed rectifier Kv channel containing KCNB1 alpha subunit. Associates with KCNH2/HERG alpha subunit Kv channel to form the rapidly activating component of the delayed rectifying potassium current (IKr) in heart. May associate with KCNQ2 and/or KCNQ3 alpha subunits to modulate the native M-type current. May associate with HCN1 and HCN2 channel subunits to increase potassium current. Forms a heterooligomer complex with KCNQ1/KVLQT1 alpha subunits which leads to currents with an apparently instantaneous activation, a rapid deactivation process and a linear current-voltage relationship and decreases the amplitude of the outward current. KCNQ1-KCNE2 channel associates with Na(+)-coupled myo-inositol symporter in the apical membrane of choroid plexus epithelium and regulates the myo-inositol gradient between blood and cerebrospinal fluid with an impact on neuron excitability. The polypeptide is Potassium voltage-gated channel subfamily E member 2 (Homo sapiens (Human)).